The chain runs to 289 residues: 5'-adenylylsulfate reductase-like 7 (289 aa).

A signal peptide spans 1 to 23 (MNLWVSIFLVSAIAGSCLPSGFA). In terms of domain architecture, Thioredoxin spans 37–157 (SVIEQKCPRS…LIQFYKETTG (121 aa)). Residues N132 and N184 are each glycosylated (N-linked (GlcNAc...) asparagine). Residues 198-218 (MVLALMFLSLKLAILIFPIMG) traverse the membrane as a helical segment.

The protein resides in the membrane. In Arabidopsis thaliana (Mouse-ear cress), this protein is 5'-adenylylsulfate reductase-like 7 (APRL7).